The primary structure comprises 205 residues: Ribosomal RNA small subunit methyltransferase G (205 aa).

S-adenosyl-L-methionine-binding positions include G73, L78, 124 to 125 (VE), and R138.

It belongs to the methyltransferase superfamily. RNA methyltransferase RsmG family.

The protein localises to the cytoplasm. It carries out the reaction guanosine(527) in 16S rRNA + S-adenosyl-L-methionine = N(7)-methylguanosine(527) in 16S rRNA + S-adenosyl-L-homocysteine. Its function is as follows. Specifically methylates the N7 position of guanine in position 527 of 16S rRNA. This Actinobacillus pleuropneumoniae serotype 7 (strain AP76) protein is Ribosomal RNA small subunit methyltransferase G.